Consider the following 257-residue polypeptide: Ribosomal RNA small subunit methyltransferase J (257 aa).

S-adenosyl-L-methionine-binding positions include 107-108, 123-124, and Asp177; these read RD and ER.

This sequence belongs to the methyltransferase superfamily. RsmJ family.

The protein resides in the cytoplasm. It catalyses the reaction guanosine(1516) in 16S rRNA + S-adenosyl-L-methionine = N(2)-methylguanosine(1516) in 16S rRNA + S-adenosyl-L-homocysteine + H(+). In terms of biological role, specifically methylates the guanosine in position 1516 of 16S rRNA. The polypeptide is Ribosomal RNA small subunit methyltransferase J (Haemophilus influenzae (strain PittGG)).